We begin with the raw amino-acid sequence, 359 residues long: Endoglucanase (359 aa).

The N-terminal stretch at 1–23 is a signal peptide; sequence MPLRALVAVIVTTAVMLVPRAWA. The active-site Proton donor is E53. Residue D110 is the Nucleophile of the active site.

The protein belongs to the glycosyl hydrolase 8 (cellulase D) family.

The catalysed reaction is Endohydrolysis of (1-&gt;4)-beta-D-glucosidic linkages in cellulose, lichenin and cereal beta-D-glucans.. The biological conversion of cellulose to glucose generally requires three types of hydrolytic enzymes: (1) Endoglucanases which cut internal beta-1,4-glucosidic bonds; (2) Exocellobiohydrolases that cut the disaccharide cellobiose from the non-reducing end of the cellulose polymer chain; (3) Beta-1,4-glucosidases which hydrolyze the cellobiose and other short cello-oligosaccharides to glucose. This Cellulomonas uda protein is Endoglucanase.